The sequence spans 289 residues: Extracellular ribonuclease (289 aa).

Positions Met1 to Ala24 are cleaved as a signal peptide. A propeptide spanning residues Ser25–Gln51 is cleaved from the precursor. The segment at Phe177–Trp197 is disordered.

Its subcellular location is the secreted. Mg(2+)-activated ribonuclease which hydrolyzes RNA apparently nonspecifically into oligonucleotides with 5'-terminal phosphate. This chain is Extracellular ribonuclease (bsn), found in Bacillus amyloliquefaciens (Bacillus velezensis).